The sequence spans 359 residues: Molybdenum import ATP-binding protein ModC (359 aa).

The ABC transporter domain occupies 1 to 229; that stretch reads MLELNFSQQL…SALRPWLQRE (229 aa). 31-38 serves as a coordination point for ATP; the sequence is GLSGAGKT. A Mop domain is found at 289–354; it reads SSSIRNILPV…IKSVSFNRQN (66 aa).

This sequence belongs to the ABC transporter superfamily. Molybdate importer (TC 3.A.1.8) family. The complex is composed of two ATP-binding proteins (ModC), two transmembrane proteins (ModB) and a solute-binding protein (ModA).

The protein resides in the cell inner membrane. It carries out the reaction molybdate(out) + ATP + H2O = molybdate(in) + ADP + phosphate + H(+). In terms of biological role, part of the ABC transporter complex ModABC involved in molybdenum import. Responsible for energy coupling to the transport system. In Yersinia pseudotuberculosis serotype I (strain IP32953), this protein is Molybdenum import ATP-binding protein ModC.